The sequence spans 240 residues: Phosphoribosylaminoimidazole-succinocarboxamide synthase (240 aa).

It belongs to the SAICAR synthetase family.

It catalyses the reaction 5-amino-1-(5-phospho-D-ribosyl)imidazole-4-carboxylate + L-aspartate + ATP = (2S)-2-[5-amino-1-(5-phospho-beta-D-ribosyl)imidazole-4-carboxamido]succinate + ADP + phosphate + 2 H(+). It participates in purine metabolism; IMP biosynthesis via de novo pathway; 5-amino-1-(5-phospho-D-ribosyl)imidazole-4-carboxamide from 5-amino-1-(5-phospho-D-ribosyl)imidazole-4-carboxylate: step 1/2. The polypeptide is Phosphoribosylaminoimidazole-succinocarboxamide synthase (Neorickettsia sennetsu (strain ATCC VR-367 / Miyayama) (Ehrlichia sennetsu)).